The following is a 179-amino-acid chain: Large ribosomal subunit protein bL17 (179 aa).

Positions 123 to 179 (RTRGTDTLPDTVTDTGPDSAPDPVPGSEPGSAAGDLPDADTAPADPGESSSNQRVIR) are disordered. Residues 154–168 (AAGDLPDADTAPADP) show a composition bias toward low complexity. Positions 170 to 179 (ESSSNQRVIR) are enriched in polar residues.

Belongs to the bacterial ribosomal protein bL17 family. In terms of assembly, part of the 50S ribosomal subunit. Contacts protein L32.

The sequence is that of Large ribosomal subunit protein bL17 from Tropheryma whipplei (strain Twist) (Whipple's bacillus).